The chain runs to 270 residues: Glutamate racemase (270 aa).

Substrate contacts are provided by residues 14 to 15 (DS) and 46 to 47 (YG). Cysteine 77 functions as the Proton donor/acceptor in the catalytic mechanism. 78 to 79 (NT) serves as a coordination point for substrate. Cysteine 189 functions as the Proton donor/acceptor in the catalytic mechanism. 190–191 (TH) serves as a coordination point for substrate.

Belongs to the aspartate/glutamate racemases family.

The catalysed reaction is L-glutamate = D-glutamate. It functions in the pathway cell wall biogenesis; peptidoglycan biosynthesis. Provides the (R)-glutamate required for cell wall biosynthesis. The chain is Glutamate racemase from Neisseria meningitidis serogroup C.